Reading from the N-terminus, the 651-residue chain is Probable Xaa-Pro aminopeptidase P (651 aa).

4 residues coordinate Mn(2+): D448, D459, E557, and E571.

Belongs to the peptidase M24B family. It depends on Mn(2+) as a cofactor.

The catalysed reaction is Release of any N-terminal amino acid, including proline, that is linked to proline, even from a dipeptide or tripeptide.. Its function is as follows. Catalyzes the removal of a penultimate prolyl residue from the N-termini of peptides. The chain is Probable Xaa-Pro aminopeptidase P (AMPP) from Coccidioides posadasii (strain C735) (Valley fever fungus).